The sequence spans 335 residues: BTB and MATH domain-containing protein 39 (335 aa).

The 128-residue stretch at 14 to 141 (MKTLCFKIMN…NGVFTIEFDL (128 aa)) folds into the MATH domain. Residues 161–226 (ADGKLIVEDQ…LQLDEFKVNV (66 aa)) form the BTB domain.

The sequence is that of BTB and MATH domain-containing protein 39 from Caenorhabditis briggsae.